We begin with the raw amino-acid sequence, 755 residues long: Catalase-peroxidase (755 aa).

The segment at residues 91 to 245 is a cross-link (tryptophyl-tyrosyl-methioninium (Trp-Tyr) (with M-271)); sequence WHSAGTYRTA…LAAVQMGLIY (155 aa). H92 (proton acceptor) is an active-site residue. Positions 193-229 are disordered; that stretch reads DNRYGKDPESMQPPGEGTLVAEPAEHGNEESRTNQGE. The span at 215-224 shows a compositional bias: basic and acidic residues; it reads PAEHGNEESR. A cross-link (tryptophyl-tyrosyl-methioninium (Tyr-Met) (with W-91)) is located at residues 245 to 271; sequence YVNPEGPEGNPDPVASAKDIRETFGRM. Heme is bound at residue H286.

Belongs to the peroxidase family. Peroxidase/catalase subfamily. Homodimer or homotetramer. Heme b is required as a cofactor. Post-translationally, formation of the three residue Trp-Tyr-Met cross-link is important for the catalase, but not the peroxidase activity of the enzyme.

The enzyme catalyses H2O2 + AH2 = A + 2 H2O. It carries out the reaction 2 H2O2 = O2 + 2 H2O. In terms of biological role, bifunctional enzyme with both catalase and broad-spectrum peroxidase activity. The protein is Catalase-peroxidase of Pseudomonas fluorescens (strain Pf0-1).